Here is a 246-residue protein sequence, read N- to C-terminus: DNA repair protein RecO (246 aa).

Belongs to the RecO family.

In terms of biological role, involved in DNA repair and RecF pathway recombination. This is DNA repair protein RecO from Alkaliphilus metalliredigens (strain QYMF).